A 154-amino-acid chain; its full sequence is MGLSDDEWHHVLGIWAKVEPDLSAHGQEVIIRLFQVHPETQERFAKFKNLKTIDELRSSEEVKKHGTTVLTALGRILKLKNNHEPELKPLAESHATKHKIPVKYLEFICEIIVKVIAEKHPSDFGADSQAAMRKALELFRNDMASKYKEFGFQG.

The Globin domain occupies 2 to 148 (GLSDDEWHHV…FRNDMASKYK (147 aa)). His65 contacts nitrite. His65 serves as a coordination point for O2. Heme b is bound at residue His94.

It belongs to the globin family. As to quaternary structure, monomeric.

It is found in the cytoplasm. It localises to the sarcoplasm. It carries out the reaction Fe(III)-heme b-[protein] + nitric oxide + H2O = Fe(II)-heme b-[protein] + nitrite + 2 H(+). It catalyses the reaction H2O2 + AH2 = A + 2 H2O. In terms of biological role, monomeric heme protein which primary function is to store oxygen and facilitate its diffusion within muscle tissues. Reversibly binds oxygen through a pentacoordinated heme iron and enables its timely and efficient release as needed during periods of heightened demand. Depending on the oxidative conditions of tissues and cells, and in addition to its ability to bind oxygen, it also has a nitrite reductase activity whereby it regulates the production of bioactive nitric oxide. Under stress conditions, like hypoxia and anoxia, it also protects cells against reactive oxygen species thanks to its pseudoperoxidase activity. This is Myoglobin (MB) from Graptemys geographica (Common map turtle).